The chain runs to 103 residues: Pyrimidine/purine nucleoside phosphorylase (103 aa).

This sequence belongs to the nucleoside phosphorylase PpnP family.

It catalyses the reaction a purine D-ribonucleoside + phosphate = a purine nucleobase + alpha-D-ribose 1-phosphate. The catalysed reaction is adenosine + phosphate = alpha-D-ribose 1-phosphate + adenine. The enzyme catalyses cytidine + phosphate = cytosine + alpha-D-ribose 1-phosphate. It carries out the reaction guanosine + phosphate = alpha-D-ribose 1-phosphate + guanine. It catalyses the reaction inosine + phosphate = alpha-D-ribose 1-phosphate + hypoxanthine. The catalysed reaction is thymidine + phosphate = 2-deoxy-alpha-D-ribose 1-phosphate + thymine. The enzyme catalyses uridine + phosphate = alpha-D-ribose 1-phosphate + uracil. It carries out the reaction xanthosine + phosphate = alpha-D-ribose 1-phosphate + xanthine. Functionally, catalyzes the phosphorolysis of diverse nucleosides, yielding D-ribose 1-phosphate and the respective free bases. Can use uridine, adenosine, guanosine, cytidine, thymidine, inosine and xanthosine as substrates. Also catalyzes the reverse reactions. The polypeptide is Pyrimidine/purine nucleoside phosphorylase (Shewanella sp. (strain ANA-3)).